A 257-amino-acid polypeptide reads, in one-letter code: Pimeloyl-[acyl-carrier protein] methyl ester esterase (257 aa).

Residues 16–240 (LVLIHGWGMN…EQASHAPFIS (225 aa)) enclose the AB hydrolase-1 domain. Substrate is bound by residues W22, 82–83 (SL), and 143–147 (FMALQ). S82 serves as the catalytic Nucleophile. Active-site residues include D207 and H235. H235 provides a ligand contact to substrate.

This sequence belongs to the AB hydrolase superfamily. Carboxylesterase BioH family. Monomer.

It is found in the cytoplasm. It catalyses the reaction 6-carboxyhexanoyl-[ACP] methyl ester + H2O = 6-carboxyhexanoyl-[ACP] + methanol + H(+). It participates in cofactor biosynthesis; biotin biosynthesis. In terms of biological role, the physiological role of BioH is to remove the methyl group introduced by BioC when the pimeloyl moiety is complete. It allows to synthesize pimeloyl-ACP via the fatty acid synthetic pathway through the hydrolysis of the ester bonds of pimeloyl-ACP esters. The protein is Pimeloyl-[acyl-carrier protein] methyl ester esterase of Aliivibrio fischeri (strain MJ11) (Vibrio fischeri).